Here is a 604-residue protein sequence, read N- to C-terminus: Kelch-like protein 15 (604 aa).

The 68-residue stretch at 31 to 98 (LDVTLVIEDH…MYYGTIELSM (68 aa)) folds into the BTB domain. In terms of domain architecture, BACK spans 133–237 (CAEIMRLLDD…TPTSVFEKVK (105 aa)). 5 Kelch repeats span residues 328 to 379 (FVFL…VIGK), 381 to 426 (IYAV…VLNN), 428 to 473 (LFIT…NKSK), 489 to 542 (KLYV…VLDK), and 544 to 590 (IMVL…VCNL).

In terms of assembly, homodimer. Dimerization does not affect PPP2R5B-binding, but is required for its proteasomal degradation. Interacts with CUL3. Directly interacts with PPP2R5B; this interaction leads to PPP2R5B proteasomal degradation. Interacts with RBBP8/CtIP; this interaction leads to RBBP8 proteasomal degradation. Interacts with PACMP micropeptide; interaction prevents ubiquitination and degradation of RBBP8/CtIP.

It is found in the nucleus. It functions in the pathway protein modification; protein ubiquitination. Its function is as follows. Substrate-specific adapter for CUL3 E3 ubiquitin-protein ligase complex. Acts as an adapter for CUL3 to target the serine/threonine-protein phosphatase 2A (PP2A) subunit PPP2R5B for ubiquitination and subsequent proteasomal degradation, thus promoting exchange with other regulatory subunits. Acts as an adapter for CUL3 to target the DNA-end resection factor RBBP8/CtIP for ubiquitination and subsequent proteasomal degradation. Through the regulation of RBBP8/CtIP protein turnover, plays a key role in DNA damage response, favoring DNA double-strand repair through error-prone non-homologous end joining (NHEJ) over error-free, RBBP8-mediated homologous recombination (HR). The sequence is that of Kelch-like protein 15 (KLHL15) from Homo sapiens (Human).